Consider the following 1629-residue polypeptide: MSTSTLINKAQTNSCGDVGVVDLLKRKVYDDTVKTMQGLDRRAKYRLNQCLGPEQCRTVRGGYPEFQIEFTGASNTSHAMAAGLRGLELEYLYTLVPYGAVSYDIGGNFPAHMMKGRSYVHCCNPALDARDLARNENYRISIENYLSRFEDKSGDYCQWQRKKPKVSKPLPRYQKACFDRYNEDPEHVTCSETFEKCRISPPAERDDIYATSLHSLYDIPYQNLGPALARKRIKVLHAAFHFSEDLLLGASEGLLTQIGGTFQRNGDVLTFSFLDESSLIYTHSFRNVFEYVTRTFFVACNRYAYMKEFRSRRVDTVFCSFIRIDTYCLYRSVFKDCDEHVFAAMDDAWEFKKKRVMLEASRPIFNDVAQFNVYFPNAKDKVCLPIFAVKSVSGAPVTTRHILVEKDFYWTALNHILTYPDGKADFRGVMSFLESIRSRVVINGTTTASQWEVDKSQLKDIALSLLLIAKLEKLKISVIEKRIKIERQGLVSLLKEFLHGLLDEYTQTMAEWVVEKGWVKSVDQVLQVTIPDLVLNFRDHFRCEFRTSANVSEVNVSEHLVATNEYYAKVSDLVDRNPTLAFDFEKFQDYCEKLGVDIDTVTELIDAISTGRAGITLDHTDDKEEQLPRTLAGSSSYLEEEPSDDLVCLSDKAIVNRSTILGELKNNVVIFEGTLPKNSVFVSAPDDPSVTIELSELHARPVSDFLSMQKPVNIVYTGEVQICQMQNYLDYLSASLVACISNLKKYLQDQWLNPGEKFQKIGVWDNLNNKWIVVPQKKKYAWGLAADVDGNQKTVILNYDEHGMPILEKSYVRLVVSTDTYLFTVVSMLGYLRHLDQKKPTATITLVDGVPGCGKTQEILSRFDANSDLILVQGREACEMIRRRANDNVPGSATKENVRTFDSFVMNRKPGKFKTLWVDEGLMVHPGLINFCINISCVSSVYIFGDRKQIPFINRVMNFSIPDNLAKLYYDEIVSRDTTKRCPLDVTHFLNSVYEKRVMSYSNVQRSLECKMISGKAKINDYRSILAEGKLLTFTQEDKEYLLKAGFKDVNTVHEAQGETYRDVNLIRVTATPLTIVSAGSPHVTVALSRHTNRFVYYTVVPDVVMTTVQKTQCVSNFLLDMYAVAYTQKXQLQISPFYTHDIPFVETNKVGQISDLQYFYDSWLPGNSFVQNNHDQWSIISSDINLHSEAVRLDMNKRHIPRTKGEFLRPLLNTAVEPPRIPGLLENLLALIKRNFNAPDLAGQLDYDFLSRKVCDGFFGKLLPPDVEASELLRLPVDHMYSVQNFDDWLNKQEPGVVGQLANWDHIGMPAADQYRHMIKRTPKAKLDLSIQSEYPALQTIVYHSKHVNAVFGPIFSCLTERLLSVVDPLRFKFFTRTTPADLEFFFRDMVVGDMEILELDISKYDKSQNKFHFEVEMRIWEMLGIDKYIEKVWENGHRKTHLRDYTAGIKTVIEYQRKSGDVTTFIGNTIIIAACLCSILPMEKVFKAGFCGDDSIIYLPRNLLYPDIQSVSNNMWNFEAKLFKKLHGYFCGRYXLRNGRYLRLLPDPLKIITKLGCKAIKDWDHLEEFRISMFDMACEYKNCFGFDVLESAVKESFPKAEGCNVAFCAIYKFLSNKYLFRTLFSDV.

Residues 48–473 (NQCLGPEQCR…SLLLIAKLEK (426 aa)) form a methyltransferase region. The region spanning 69-292 (EFTGASNTSH…HSFRNVFEYV (224 aa)) is the Alphavirus-like MT domain. A (+)RNA virus helicase ATP-binding domain is found at 821-976 (YLFTVVSMLG…KLYYDEIVSR (156 aa)). The interval 845-1099 (TLVDGVPGCG…RHTNRFVYYT (255 aa)) is helicase. 849 to 856 (GVPGCGKT) lines the ATP pocket. Residues 977–1130 (DTTKRCPLDV…DMYAVAYTQK (154 aa)) enclose the (+)RNA virus helicase C-terminal domain. A RdRp catalytic domain is found at 1396-1509 (MEILELDISK…YLPRNLLYPD (114 aa)).

This sequence belongs to the ssRNA positive-strand viruses RNA-directed RNA polymerase family. As to quaternary structure, heterodimer of a large and a small subunit.

It catalyses the reaction RNA(n) + a ribonucleoside 5'-triphosphate = RNA(n+1) + diphosphate. The enzyme catalyses ATP + H2O = ADP + phosphate + H(+). Is an RNA-dependent RNA polymerase active in viral RNA replication. In terms of biological role, is a methyltransferase active in RNA capping and an RNA helicase. Methyltransferase displays a cytoplasmic capping enzyme activity. This function is necessary since all viral RNAs are synthesized in the cytoplasm, and host capping enzymes are restricted to the nucleus. Helicase region probably exhibits NTPase and RNA unwinding activities (Potential). It also acts as a suppressor of RNA-mediated gene silencing, also known as post-transcriptional gene silencing (PTGS), a mechanism of plant viral defense that limits the accumulation of viral RNAs. May mediate silencing suppression through either inhibition of HEN1-mediated siRNA or siRNA demethylation. The polypeptide is Replicase large subunit (Crotalaria juncea (Sunn hemp)).